A 184-amino-acid polypeptide reads, in one-letter code: Probable RNA 2'-phosphotransferase (184 aa).

This sequence belongs to the KptA/TPT1 family.

Functionally, removes the 2'-phosphate from RNA via an intermediate in which the phosphate is ADP-ribosylated by NAD followed by a presumed transesterification to release the RNA and generate ADP-ribose 1''-2''-cyclic phosphate (APPR&gt;P). May function as an ADP-ribosylase. The protein is Probable RNA 2'-phosphotransferase of Escherichia coli O8 (strain IAI1).